Consider the following 1518-residue polypeptide: Hormone receptor 4 (1518 aa).

Disordered stretches follow at residues 30 to 50, 145 to 327, 380 to 587, 672 to 820, and 887 to 913; these read RCSS…DLLA, TSST…KLSE, PSRI…QPQA, VGVG…SSVA, and SSNS…EPTD. The segment covering 34–46 has biased composition (polar residues); it reads DGESIADTSTSSP. Composition is skewed to low complexity over residues 145–189 and 208–219; these read TSST…SSSG and SSSSAISAAAAS. Residues 238–260 are compositionally biased toward gly residues; it reads EGGGPAGDGSGATGGGNTSGGST. Residues 291–323 show a composition bias toward low complexity; that stretch reads STTTTTGRPTLTPTNGVLSSASAGTGISTGSSA. Basic and acidic residues predominate over residues 400 to 429; it reads QRERERERDRERDRERERERDRDREREREQ. Polar residues-rich tracts occupy residues 430-451 and 475-489; these read SISS…QLSH and RKSS…SQSM. 4 stretches are compositionally biased toward low complexity: residues 490 to 529, 546 to 586, 681 to 705, and 738 to 799; these read QHLT…PHSL, HHQQ…QQPQ, GSVQ…QTPS, and GQSH…PSSS. 2 stretches are compositionally biased toward gly residues: residues 800–812 and 892–902; these read SGGG…GVGG and GLGGVGGGMGG. Residues 918 to 993 constitute a DNA-binding region (nuclear receptor); it reads PLVCMICEDK…QGMVLQAVRE (76 aa). 2 NR C4-type zinc fingers span residues 921–941 and 957–976; these read CMIC…CEGC and CVAD…CQYC. Disordered regions lie at residues 1015-1101, 1142-1210, and 1341-1371; these read KHKK…AAVA, LLQA…LPPH, and KRRG…STPI. Residues 1021–1060 show a composition bias toward low complexity; it reads QKQQQQAAQQQQQQAAAQQQHQQQQQHQQHQQHQQQQLHS. Over residues 1061–1077 the composition is skewed to basic residues; the sequence is PLHHHHHQGHQSHHAQQ. Low complexity-rich tracts occupy residues 1078–1101 and 1144–1193; these read QHHP…AAVA and QAPP…HHQQ. A compositionally biased stretch (gly residues) spans 1194–1205; that stretch reads QGGGGGGAGGGA. Positions 1250–1518 constitute an NR LBD domain; the sequence is HALGMIQTLI…PFVLNSASIR (269 aa). Over residues 1351 to 1368 the composition is skewed to low complexity; sequence HGSPASTPLSTPTGTPLS.

It belongs to the nuclear hormone receptor family. NR1 subfamily. In terms of tissue distribution, during L2 and L3 stages, strong constitutive expression is seen in the ring gland. Lower expression is detected in specific neurons of the central nervous system (CNS) (at protein level).

It localises to the nucleus. Functionally, coordinates growth and maturation by mediating endocrine responses to the attainment of critical weight during larval development. Plays a central role in the genetic cascades triggered by the steroid hormone ecdysone at the onset of metamorphosis, acting as both a repressor of the early ecdysone-induced regulatory genes and an inducer of the ftz-f1 midprepupal competence factor. The sequence is that of Hormone receptor 4 (Hr4) from Drosophila melanogaster (Fruit fly).